Reading from the N-terminus, the 203-residue chain is Kunitz trypsin inhibitor 6 (203 aa).

The first 21 residues, 1–21 (MKTFQLMMISFLFVAITTTSG), serve as a signal peptide directing secretion. The cysteines at positions 70 and 115 are disulfide-linked. 5 N-linked (GlcNAc...) asparagine glycosylation sites follow: Asn94, Asn127, Asn136, Asn144, and Asn197.

The protein belongs to the protease inhibitor I3 (leguminous Kunitz-type inhibitor) family.

In terms of biological role, exhibits Kunitz trypsin protease inhibitor activity. The polypeptide is Kunitz trypsin inhibitor 6 (Arabidopsis thaliana (Mouse-ear cress)).